A 503-amino-acid polypeptide reads, in one-letter code: Major facilitator superfamily domain-containing protein 4A (503 aa).

12 helical membrane-spanning segments follow: residues 19-39, 53-73, 82-102, 105-125, 139-159, 214-234, 289-309, 338-358, 366-386, 392-412, 427-447, and 455-475; these read LTYWSVFFSFGLCIAFLGPTL, ITWVFFAQQFCLLVGSTLGGV, LFLLFLSSLTISVVFVIIPFC, VGVLALVMAIAGLAMGCIDTI, AIFLQVLHFFVGFGALLSPLI, YAFWIMAAINLPVPVAVFYLI, IWNAPFTFFAIHMCAAVTLFM, GYLPSLFWAFITLGRLISIPV, SMLFINLIGVTATFLFLLLSQ, MFVGTALLGLWLSSVFPSMLA, VLVTGAGMGEMVLQILVGSVM, and FLVCGICLSSLAFTLYAVLLV. The disordered stretch occupies residues 484 to 503; it reads SEDSACKPPGLDGEATSYQS.

This sequence belongs to the major facilitator superfamily.

The protein localises to the membrane. The chain is Major facilitator superfamily domain-containing protein 4A (mfsd4a) from Xenopus tropicalis (Western clawed frog).